A 517-amino-acid chain; its full sequence is Gamma-1-syntrophin (517 aa).

Residues 57–140 (TVTIRRQTVG…EVTLTVSFLK (84 aa)) enclose the PDZ domain. The PH domain maps to 283 to 390 (QIVYMGWCEA…WERAFQTATF (108 aa)).

Belongs to the syntrophin family. Isoform 1, but not isoform 2, interacts with the dystrophin protein DMD and related proteins DTNA and DTNB. Interacts with DGKZ. Brain specific. In CNS, it is expressed in the perikaryon and proximal portion of the neuronal processes. Strong expression in the hippocampus, neuron-rich dendate granule cells, and pyramidal cell layers. Highly expressed in neurons of the cerebral cortex. Also expressed in the cerebellar cortex, deep cerebellar nuclei, thalamus, and basal ganglia. No expression in muscle cells.

It is found in the cytoplasm. Its subcellular location is the cytoskeleton. The protein resides in the nucleus. Adapter protein that binds to and probably organizes the subcellular localization of a variety of proteins. May link various receptors to the actin cytoskeleton and the dystrophin glycoprotein complex. May participate in regulating the subcellular location of diacylglycerol kinase-zeta to ensure that diacylglycerol is rapidly inactivated following receptor activation. This chain is Gamma-1-syntrophin (SNTG1), found in Homo sapiens (Human).